Here is a 1079-residue protein sequence, read N- to C-terminus: Intraflagellar transport protein 80 (1079 aa).

Positions 495–514 (GDMIRPSTVQNQPSTQGLPN) are disordered. Positions 501 to 514 (STVQNQPSTQGLPN) are enriched in polar residues.

It localises to the cell projection. The protein resides in the cilium. Its subcellular location is the flagellum. It is found in the cytoplasm. The protein localises to the cytoskeleton. It localises to the flagellum axoneme. The protein resides in the flagellum basal body. Its function is as follows. Component of the intraflagellar transport complex B (IFT-B) involved in flagellar assembly. The chain is Intraflagellar transport protein 80 from Giardia intestinalis (strain ATCC 50803 / WB clone C6) (Giardia lamblia).